Consider the following 761-residue polypeptide: BMP/retinoic acid-inducible neural-specific protein 1 (761 aa).

The N-terminal stretch at 1–22 is a signal peptide; the sequence is MNWRLVEFLYLLFIWDHILVQP. The MACPF domain occupies 68–251; sequence RYKIYREFAR…FVQSALSYIM (184 aa). Residues N156, N433, N443, N553, N599, N631, and N677 are each glycosylated (N-linked (GlcNAc...) asparagine).

It belongs to the BRINP family.

It localises to the cytoplasm. Functionally, plays a role in neurogenesis and brain development. May suppress cell cycle progression in postmitotic neurons by inhibiting G1/S transition. The protein is BMP/retinoic acid-inducible neural-specific protein 1 (BRINP1) of Gallus gallus (Chicken).